The primary structure comprises 450 residues: Molybdate-anion transporter (450 aa).

The next 12 membrane-spanning stretches (helical) occupy residues 1–21, 43–63, 79–99, 128–148, 174–194, 195–215, 249–269, 278–298, 311–331, 344–364, 376–396, and 409–429; these read MLVTAYLAFVGLLASCLGLEL, LDFYQVYFLALAADWLQAPYL, ILYVCGLASTVLFGLVASSLV, FVLLVGRALGGLSTALLFSAF, AAFWNHVLAVVAGVAAEAVAS, WIGLGPVAPFVAAIPLLALAG, VLLLGTIQALFESVIFIFVFL, GAPLGIIFSSFMAASLLGSSL, PMHLLSLAVLIVVFSLFMLTF, FIAFLLIELACGLYFPSMSFL, GVLNWFRVPLHSLACLGLLVL, and FSICSAVMVMALLAVVGLFTV.

Belongs to the major facilitator superfamily. In terms of tissue distribution, expressed ubiquitously but at relatively higher levels in the olfactory bulb and the skeletal muscle.

Its subcellular location is the cell membrane. Functionally, mediates high-affinity intracellular uptake of the rare oligo-element molybdenum. In Homo sapiens (Human), this protein is Molybdate-anion transporter (MFSD5).